A 2332-amino-acid chain; its full sequence is Genome polyprotein (2332 aa).

The region spanning 1 to 201 is the Peptidase C28 domain; it reads MNTTDCFIAL…WKAKVQRKLK (201 aa). Residues 1–1480 are Cytoplasmic-facing; that stretch reads MNTTDCFIAL…SFVKRAFKRL (1480 aa). Residues Cys51, His148, and Asp163 each act as for leader protease activity in the active site. 2 disordered regions span residues 197–218 and 238–265; these read QRKL…QSGN and QLGD…NTQN. Residue Gly202 is the site of N-myristoyl glycine; by host attachment. 2 stretches are compositionally biased toward polar residues: residues 204–218 and 238–251; these read GQSS…QSGN and QLGD…SNEG. Residues 252–265 show a composition bias toward low complexity; sequence STDTTSTHTTNTQN. A disulfide bridge connects residues Cys406 and Cys858. Positions 788–796 are antigenic epitope; the sequence is ALLRASTYY. The short motif at 869–871 is the Cell attachment site element; the sequence is RGD. Residues 1189-1353 form the SF3 helicase domain; it reads NVHIANLCKV…DGYKINSKLD (165 aa). 1217–1224 serves as a coordination point for ATP; that stretch reads GKSGQGKS. The stretch at 1481-1501 is an intramembrane region; the sequence is KENFEIVALCLTLLANIVIMI. The Cytoplasmic segment spans residues 1502–2332; that stretch reads RETRKRQKMV…RWVNAVCGDA (831 aa). The segment covering 1529–1538 has biased composition (basic and acidic residues); that stretch reads KTLDEAEKSP. The interval 1529 to 1584 is disordered; that stretch reads KTLDEAEKSPLETSGASTVGFRERTLPGQKACDDVNSEPAQPVEEQPQAEGPYAGP. Residues Tyr1581, Tyr1604, and Tyr1628 each carry the O-(5'-phospho-RNA)-tyrosine modification. The 197-residue stretch at 1652–1848 folds into the Peptidase C3 domain; sequence APPTDLQKMV…YCSCVSRSML (197 aa). Catalysis depends on His1695, which acts as the For protease 3C activity; Proton donor/acceptor. Residues Asp1733 and Cys1812 each act as for protease 3C activity in the active site. Short sequence motifs (nuclear localization signal) lie at residues 1878 to 1886 and 1879 to 1886; these read MRKTKLAPT and RKTKLAPT. The region spanning 2096–2214 is the RdRp catalytic domain; that stretch reads RNVWDVDYSA…ASDYDLDFEA (119 aa). Residue Asp2200 is the For RdRp activity of the active site.

Belongs to the picornaviruses polyprotein family. As to quaternary structure, interacts with host ISG15. In terms of assembly, interacts (via R-G-D motif) with host ITGAV/ITGB6. Interacts with host MAVS; this interaction inhibits binding of host TRAF3 to MAVS, thereby suppressing interferon-mediated responses. Forms homooligomers. As to quaternary structure, homohexamer. Interacts with host VIM. Interacts with host BECN1. In terms of assembly, interacts with host DCTN3. Interacts with RNA-dependent RNA polymerase; this interaction allows 3B-1 to binds 2 polymerases and act as a primer. It also allows the recruitment of the RNA-dependent RNA polymerase to host membranes. As to quaternary structure, interacts with RNA-dependent RNA polymerase; this interaction allows 3B-2 to act as a primer. In terms of assembly, interacts with RNA-dependent RNA polymerase; this interaction allows 3B-3 to act as a primer. Interacts with 3B-1; this interaction allows 3B-1 to binds 2 polymerases and act as a primer. It also allows the recruitment of the RNA-dependent RNA polymerase to host membranes. Interacts with 3B-2; this interaction allows 3B-2 to act as a primer. Interacts with 3B-3; this interaction allows 3B-3 to act as a primer. In terms of processing, removes six residues from its own C-terminus, generating sLb(pro). Specific enzymatic cleavages in vivo by the viral proteases yield a variety of precursors and mature proteins. The polyprotein seems to be cotranslationally cleaved at the 2A/2B junction by a ribosomal skip from one codon to the next without formation of a peptide bond. This process would release the L-P1-2A peptide from the translational complex. Post-translationally, during virion maturation, immature virions are rendered infectious following cleavage of VP0 into VP4 and VP2. This maturation seems to be an autocatalytic event triggered by the presence of RNA in the capsid and is followed by a conformational change of the particle. In terms of processing, myristoylation is required during RNA encapsidation and formation of the mature virus particle. Uridylylated by the polymerase and covalently linked to the 5'-end of genomic RNA. These uridylylated forms act as a nucleotide-peptide primer for the polymerase. Post-translationally, the disulfide bond between VP1 and VP2 occurs after release of virus from the host cell.

It localises to the host nucleus. It is found in the host cytoplasm. The protein resides in the virion. Its subcellular location is the host endoplasmic reticulum membrane. The protein localises to the host cytoplasmic vesicle membrane. It carries out the reaction Autocatalytically cleaves itself from the polyprotein of the foot-and-mouth disease virus by hydrolysis of a Lys-|-Gly bond, but then cleaves host cell initiation factor eIF-4G at bonds -Gly-|-Arg- and -Lys-|-Arg-.. The enzyme catalyses a ribonucleoside 5'-triphosphate + H2O = a ribonucleoside 5'-diphosphate + phosphate + H(+). It catalyses the reaction RNA(n) + a ribonucleoside 5'-triphosphate = RNA(n+1) + diphosphate. The catalysed reaction is Selective cleavage of Gln-|-Gly bond in the poliovirus polyprotein. In other picornavirus reactions Glu may be substituted for Gln, and Ser or Thr for Gly.. In terms of biological role, autocatalytically cleaves itself from the polyprotein at the L/VP0 junction. Also cleaves the host translation initiation factors EIF4G1 and EIF4G3, in order to shut off the capped cellular mRNA transcription. Plays a role in counteracting host innate antiviral response using diverse mechanisms. Possesses a deubiquitinase activity acting on both 'Lys-48' and 'Lys-63'-linked polyubiquitin chains. In turn, inhibits the ubiquitination and subsequent activation of key signaling molecules of type I IFN response such as host RIGI, TBK1, TRAF3 and TRAF6. Inhibits host NF-kappa-B activity by inducing a decrease in RELA mRNA levels. Cleaves a peptide bond in the C-terminus of host ISG15, resulting in the damaging of this modifier that can no longer be attached to target proteins. Also cleaves host G3BP1 and G3BP2 in order to inhibit cytoplasmic stress granules assembly. Lies on the inner surface of the capsid shell. After binding to the host receptor, the capsid undergoes conformational changes. Capsid protein VP4 is released, capsid protein VP1 N-terminus is externalized, and together, they shape a pore in the host membrane through which the viral genome is translocated into the host cell cytoplasm. After genome has been released, the channel shrinks. Its function is as follows. Forms an icosahedral capsid of pseudo T=3 symmetry with capsid proteins VP1 and VP3. The capsid is composed of 60 copies of each capsid protein organized in the form of twelve pentamers and encloses the viral positive strand RNA genome. Upon acidifcation in the endosome, dissociates into pentamers. Functionally, forms an icosahedral capsid of pseudo T=3 symmetry with capsid proteins VP2 and VP3. The capsid is composed of 60 copies of each capsid protein organized in the form of twelve pentamers and encloses the viral positive strand RNA genome. Mediates cell entry by attachment to an integrin receptor, usually host ITGAV/ITGB6, via a conserved arginine-glycine-aspartic acid (R-G-D) motif. In addition, targets host MAVS to suppress type I IFN pathway. Upon acidifcation in the endosome, dissociates into pentamers. In terms of biological role, forms an icosahedral capsid of pseudo T=3 symmetry with capsid proteins VP0 and VP3. The capsid is composed of 60 copies of each capsid protein organized in the form of twelve pentamers and encloses the viral positive strand RNA genome. Upon acidifcation in the endosome, dissociates into pentamers. Mediates self-processing of the polyprotein by a translational effect termed 'ribosome skipping'. Mechanistically, 2A-mediated cleavage occurs between the C-terminal glycine and the proline of the downstream protein 2B. In the case of foot-and-mouth disease virus, the 2A oligopeptide is post-translationally 'trimmed' from the C-terminus of the upstream protein 1D by 3C proteinase. Its function is as follows. Plays an essential role in the virus replication cycle by acting as a viroporin. Creates a pore in the host endoplasmic reticulum and as a consequence releases Ca2+ in the cytoplasm of infected cell. In turn, high levels of cytoplasmic calcium may trigger membrane trafficking and transport of viral ER-associated proteins to viroplasms, sites of viral genome replication. Functionally, associates with and induces structural rearrangements of intracellular membranes. Triggers host autophagy by interacting with host BECN1 and thereby promotes viral replication. Participates in viral replication and interacts with host DHX9. Displays RNA-binding, nucleotide binding and NTPase activities. May play a role in virion morphogenesis and viral RNA encapsidation by interacting with the capsid protein VP3. In terms of biological role, plays important roles in virus replication, virulence and host range. Cooperates with host DDX56 to inhibit IRF3 nuclear translocation and subsequent type I interferon production. Covalently linked to the 5'-end of both the positive-strand and negative-strand genomic RNAs. Acts as a genome-linked replication primer. Its function is as follows. Cysteine protease that generates mature viral proteins from the precursor polyprotein. In addition to its proteolytic activity, binds to viral RNA and thus influences viral genome replication. RNA and substrate bind cooperatively to the protease. Functionally, RNA-directed RNA polymerase 3D-POL replicates genomic and antigenomic RNA by recognizing replications specific signals. Covalently attaches UMP to a tyrosine of VPg, which is used to prime RNA synthesis. The positive stranded RNA genome is first replicated at virus induced membranous vesicles, creating a dsRNA genomic replication form. This dsRNA is then used as template to synthesize positive stranded RNA genomes. ss(+)RNA genomes are either translated, replicated or encapsidated. This Bos taurus (Bovine) protein is Genome polyprotein.